The sequence spans 71 residues: Exodeoxyribonuclease 7 small subunit (71 aa).

The protein belongs to the XseB family. In terms of assembly, heterooligomer composed of large and small subunits.

It is found in the cytoplasm. It carries out the reaction Exonucleolytic cleavage in either 5'- to 3'- or 3'- to 5'-direction to yield nucleoside 5'-phosphates.. Functionally, bidirectionally degrades single-stranded DNA into large acid-insoluble oligonucleotides, which are then degraded further into small acid-soluble oligonucleotides. In Clostridium botulinum (strain Kyoto / Type A2), this protein is Exodeoxyribonuclease 7 small subunit.